A 955-amino-acid polypeptide reads, in one-letter code: Isoleucine--tRNA ligase (955 aa).

The 'HIGH' region signature appears at 58–68 (IYANGDIHIGH). Position 552 (glutamate 552) interacts with L-isoleucyl-5'-AMP. Positions 593–597 (KMSKS) match the 'KMSKS' region motif. Lysine 596 contributes to the ATP binding site. Cysteine 918, cysteine 921, cysteine 938, and cysteine 941 together coordinate Zn(2+).

The protein belongs to the class-I aminoacyl-tRNA synthetase family. IleS type 1 subfamily. Monomer. Zn(2+) is required as a cofactor.

The protein resides in the cytoplasm. It carries out the reaction tRNA(Ile) + L-isoleucine + ATP = L-isoleucyl-tRNA(Ile) + AMP + diphosphate. Catalyzes the attachment of isoleucine to tRNA(Ile). As IleRS can inadvertently accommodate and process structurally similar amino acids such as valine, to avoid such errors it has two additional distinct tRNA(Ile)-dependent editing activities. One activity is designated as 'pretransfer' editing and involves the hydrolysis of activated Val-AMP. The other activity is designated 'posttransfer' editing and involves deacylation of mischarged Val-tRNA(Ile). This Vesicomyosocius okutanii subsp. Calyptogena okutanii (strain HA) protein is Isoleucine--tRNA ligase.